A 139-amino-acid polypeptide reads, in one-letter code: ATP synthase epsilon chain (139 aa).

It belongs to the ATPase epsilon chain family. In terms of assembly, F-type ATPases have 2 components, CF(1) - the catalytic core - and CF(0) - the membrane proton channel. CF(1) has five subunits: alpha(3), beta(3), gamma(1), delta(1), epsilon(1). CF(0) has three main subunits: a, b and c.

It is found in the cell inner membrane. Functionally, produces ATP from ADP in the presence of a proton gradient across the membrane. This Pseudomonas putida (strain ATCC 47054 / DSM 6125 / CFBP 8728 / NCIMB 11950 / KT2440) protein is ATP synthase epsilon chain.